We begin with the raw amino-acid sequence, 283 residues long: Polyamine aminopropyltransferase (283 aa).

In terms of domain architecture, PABS spans 5 to 238; that stretch reads STWIDEYHKG…GIWSWTFASE (234 aa). Residue Gln32 participates in S-methyl-5'-thioadenosine binding. Spermidine-binding residues include His63 and Asp87. Residues Glu107 and 139–140 each bind S-methyl-5'-thioadenosine; that span reads DG. The active-site Proton acceptor is the Asp158. 158-161 is a binding site for spermidine; sequence DCSD.

Belongs to the spermidine/spermine synthase family. In terms of assembly, homodimer or homotetramer.

The protein localises to the cytoplasm. It carries out the reaction S-adenosyl 3-(methylsulfanyl)propylamine + putrescine = S-methyl-5'-thioadenosine + spermidine + H(+). It functions in the pathway amine and polyamine biosynthesis; spermidine biosynthesis; spermidine from putrescine: step 1/1. Catalyzes the irreversible transfer of a propylamine group from the amino donor S-adenosylmethioninamine (decarboxy-AdoMet) to putrescine (1,4-diaminobutane) to yield spermidine. This chain is Polyamine aminopropyltransferase, found in Prochlorococcus marinus (strain MIT 9312).